The primary structure comprises 494 residues: Glycogen synthase (494 aa).

Lysine 15 lines the ADP-alpha-D-glucose pocket.

It belongs to the glycosyltransferase 1 family. Bacterial/plant glycogen synthase subfamily.

The enzyme catalyses [(1-&gt;4)-alpha-D-glucosyl](n) + ADP-alpha-D-glucose = [(1-&gt;4)-alpha-D-glucosyl](n+1) + ADP + H(+). It participates in glycan biosynthesis; glycogen biosynthesis. Synthesizes alpha-1,4-glucan chains using ADP-glucose. The sequence is that of Glycogen synthase from Albidiferax ferrireducens (strain ATCC BAA-621 / DSM 15236 / T118) (Rhodoferax ferrireducens).